Consider the following 228-residue polypeptide: Cytidylate kinase (228 aa).

ATP is bound at residue 17-25 (GPTASGKGT).

The protein belongs to the cytidylate kinase family. Type 1 subfamily.

The protein resides in the cytoplasm. The enzyme catalyses CMP + ATP = CDP + ADP. It catalyses the reaction dCMP + ATP = dCDP + ADP. This chain is Cytidylate kinase, found in Burkholderia pseudomallei (strain 1106a).